Consider the following 280-residue polypeptide: Serine protease 33 (280 aa).

Residues 1–22 (MRGVSCLQVLLLLVLGAAGTQG) form the signal peptide. Residues 37-279 (IVGGRDGRDG…YSPWIQARVS (243 aa)) form the Peptidase S1 domain. An intrachain disulfide couples Cys62 to Cys78. Catalysis depends on charge relay system residues His77 and Asp126. Disulfide bonds link Cys160/Cys237, Cys193/Cys216, and Cys227/Cys255. Ser231 acts as the Charge relay system in catalysis.

This sequence belongs to the peptidase S1 family. As to expression, predominantly expressed in macrophages. Present in the spleen, small and large intestine, lung and brain (at protein level). Highly expressed in peripheral leukocytes, ovary, retina, spleen and stomach. Moderately expressed in thymus, uterus and platelets, as well as some brain tissues, such as thalamus and fetal brain.

It localises to the secreted. Functionally, serine protease that has amidolytic activity, cleaving its substrates before Arg residues. In Homo sapiens (Human), this protein is Serine protease 33 (PRSS33).